The sequence spans 499 residues: Pyruvate kinase 1 (499 aa).

Arginine 50 provides a ligand contact to substrate. Asparagine 52, serine 54, aspartate 84, and threonine 85 together coordinate K(+). 52–55 (NFSH) lines the ATP pocket. Position 91 (arginine 91) interacts with ATP. A Mg(2+)-binding site is contributed by glutamate 241. Glycine 264, aspartate 265, and threonine 297 together coordinate substrate. Aspartate 265 is a binding site for Mg(2+).

It belongs to the pyruvate kinase family. In terms of assembly, homotetramer. Requires Mg(2+) as cofactor. K(+) is required as a cofactor.

The catalysed reaction is pyruvate + ATP = phosphoenolpyruvate + ADP + H(+). It functions in the pathway carbohydrate degradation; glycolysis; pyruvate from D-glyceraldehyde 3-phosphate: step 5/5. Activated by fructose 2,6-bisphosphate, activated by the effector in a cooperative manner. In Trypanosoma brucei brucei, this protein is Pyruvate kinase 1 (PYK1).